The chain runs to 1472 residues: ABC transporter FGM5 (1472 aa).

Transmembrane regions (helical) follow at residues 32–52 (IILGILPAAIFILLALTRVAT), 67–87 (FTKLAVIAATAALQLVLLILS), 100–120 (FAVANSALGFSQWIVTLALSF), 163–183 (YAGVFTATIGLKVITLLLELQ), 197–217 (SPEETSSLFNLGVYFWLIGIF), 271–291 (ALIVPLILPVVPRIAMIGFQY), 316–336 (GLIGAALIIYAGIAISDALFW), 386–406 (FHGLHDFWANIIEIGLGCFLL), 412–432 (LAFISPIVVILLCVAATTAIA), 493–513 (LLIMTATVAFVPSAMSPVVAF), and 534–554 (LLTNPLGAMFQSVPAVIAAFV). In terms of domain architecture, ABC transmembrane type-1 1 spans 284–551 (IAMIGFQYAQ…MFQSVPAVIA (268 aa)). Positions 605–834 (ISIVDGSFGW…GIYIPTLGLS (230 aa)) constitute an ABC transporter 1 domain. Residue 638-645 (GPVASGKS) coordinates ATP. Residues asparagine 682, asparagine 696, asparagine 763, asparagine 784, and asparagine 843 are each glycosylated (N-linked (GlcNAc...) asparagine). 4 helical membrane-spanning segments follow: residues 900-920 (LLSGIMYAVGRNFPSIWMGWW), 938-958 (LFRGLQIISLFLCATAVVIFM), 1003-1023 (GELPISLLNTVIQIFDVFAMA), and 1024-1044 (VVVAVGAPWLAIAYPVVFSII). Positions 900–1139 (LLSGIMYAVG…VGVVAISTQL (240 aa)) constitute an ABC transmembrane type-1 2 domain. N-linked (GlcNAc...) asparagine glycosylation is present at asparagine 1101. The helical transmembrane segment at 1116–1136 (FLATFLNLIVMVLAVGVVAIS) threads the bilayer. Residues 1218-1468 (YKNDDESPAS…EGSWFSQLWA (251 aa)) form the ABC transporter 2 domain. 1255–1262 (GRTGSGKS) contacts ATP. N-linked (GlcNAc...) asparagine glycosylation is found at asparagine 1277 and asparagine 1293.

The protein belongs to the ABC transporter superfamily. ABCC family. Conjugate transporter (TC 3.A.1.208) subfamily.

Its subcellular location is the cell membrane. The protein operates within secondary metabolite biosynthesis. ABC transporter; part of the Fg3_54/C64 gene cluster that mediates the biosynthesis of the octapeptide fusaoctaxin A, a virulence factor that is required for cell-to-cell invasiveness of plant host. The 2 nonribosomal peptide synthetases NRPS9 and NRPS5 form an assembly line which likely utilizes GABA as a starter unit (loaded on the unique module M1 of NRPS9) and sequentially incorporates seven extender units composed of the residues L-Ala, L-allo-Ile, L-Ser, L-Val, L-Ser, L-Leu and L-Leu, respectively. During the process, each of the residues that are tethered on modules M3-M7 of NRPS5 containing an E domain can undergo an epimerization reaction to produce a D-configuration before the transpeptidation reaction occurs. The elongation of the peptidyl chain might be terminated by module M8-mediated L-Leu incorporation, followed by R domain-catalyzed 4 electron reduction to release the resulting octapeptide from the assembly line as an alcohol. Fusaoctaxin A is cleaved by the cluster specific ABC transporter FGM5 to the pentapeptide fusapentaxin A and the tripeptide fusatrixin A. The other enzymes from the cluster, FGM1, FGM2, FGM3 and FGM9 seem not to be involved in the biosynthesis of fusaoctaxin A and their functions have still to be determined. The polypeptide is ABC transporter FGM5 (Gibberella zeae (strain ATCC MYA-4620 / CBS 123657 / FGSC 9075 / NRRL 31084 / PH-1) (Wheat head blight fungus)).